The sequence spans 648 residues: Cell surface glycoprotein MUC18 (648 aa).

The first 23 residues, 1-23 (MGLPKLVCVFLFAACCCCRRAAG), serve as a signal peptide directing secretion. Ig-like V-type domains are found at residues 24 to 131 (VPGE…HYVE) and 141 to 244 (PTIQ…KEVT). The Extracellular portion of the chain corresponds to 24-563 (VPGEEKQPVP…LPQPESKGVV (540 aa)). 5 cysteine pairs are disulfide-bonded: C50–C118, C163–C225, C274–C322, C367–C409, and C454–C501. A glycan (N-linked (GlcNAc...) asparagine) is linked at N58. 3 consecutive Ig-like C2-type domains span residues 246 to 332 (PVFY…TTIT), 337 to 426 (PLEL…QLVS), and 432 to 512 (SPWM…SNTT). The disordered stretch occupies residues 281-304 (QPHFTINKKDPSTGEMEEESTDEN). Residue N510 is glycosylated (N-linked (GlcNAc...) asparagine). The span at 532–549 (TGLSTLTVSPHTRANSTS) shows a compositional bias: polar residues. Residues 532–554 (TGLSTLTVSPHTRANSTSTEKKL) are disordered. Residues 564–584 (IVAVIVCTLVLAVLGAALYFF) traverse the membrane as a helical segment. The Cytoplasmic portion of the chain corresponds to 585 to 648 (YKKGKLPCGR…QGEKYIDLRH (64 aa)). Residues S608 and S616 each carry the phosphoserine modification. Positions 625 to 648 (LLQGSNGDKRAPGDQGEKYIDLRH) are disordered. Basic and acidic residues predominate over residues 631 to 648 (GDKRAPGDQGEKYIDLRH).

As to expression, detected in melanoma cell lines.

It localises to the membrane. Functionally, plays a role in cell adhesion, and in cohesion of the endothelial monolayer at intercellular junctions in vascular tissue. Its expression may allow melanoma cells to interact with cellular elements of the vascular system, thereby enhancing hematogeneous tumor spread. Could be an adhesion molecule active in neural crest cells during embryonic development. Acts as a surface receptor that triggers tyrosine phosphorylation of FYN and PTK2/FAK1, and a transient increase in the intracellular calcium concentration. This is Cell surface glycoprotein MUC18 (Mcam) from Mus musculus (Mouse).